Consider the following 142-residue polypeptide: Large ribosomal subunit protein bL17 (142 aa).

It belongs to the bacterial ribosomal protein bL17 family. Part of the 50S ribosomal subunit. Contacts protein L32.

This is Large ribosomal subunit protein bL17 from Methylocella silvestris (strain DSM 15510 / CIP 108128 / LMG 27833 / NCIMB 13906 / BL2).